Reading from the N-terminus, the 459-residue chain is ERBB receptor feedback inhibitor 1 (459 aa).

S2 carries the post-translational modification N-acetylserine. A phosphothreonine mark is found at T126 and T130. A disordered region spans residues 227–352; the sequence is QNRVVPDPNP…VMPPTQSFAP (126 aa). Phosphoserine occurs at positions 250 and 271. Residues 264 to 273 are compositionally biased toward polar residues; it reads SSCTHRASPS. The segment covering 282–291 has biased composition (pro residues); sequence PPRVPIPPRP. A Phosphoserine modification is found at S300. A compositionally biased stretch (basic and acidic residues) spans 310-323; sequence DEDRPPKVPPREPL. The span at 324-335 shows a compositional bias: polar residues; sequence SRSNSRTPSPKS. Residues 332 to 361 are interaction with EGFR and ERBB2 and regulation of EGFR activation; sequence SPKSLPSYLNGVMPPTQSFAPDPKYVSSKA. S458 is subject to Phosphoserine.

It belongs to the MIG6 family. Interacts with EGFR and ERBB2.

The protein resides in the cytoplasm. It is found in the cell membrane. It localises to the nucleus. Its function is as follows. Negative regulator of EGFR signaling in skin morphogenesis. Acts as a negative regulator for several EGFR family members, including ERBB2, ERBB3 and ERBB4. Inhibits EGFR catalytic activity by interfering with its dimerization. Inhibits autophosphorylation of EGFR, ERBB2 and ERBB4. Important for normal keratinocyte proliferation and differentiation. Plays a role in modulating the response to steroid hormones in the uterus. Required for normal response to progesterone in the uterus and for fertility. Mediates epithelial estrogen responses in the uterus by regulating ESR1 levels and activation. Important for regulation of endometrium cell proliferation. Important for normal prenatal and perinatal lung development. The chain is ERBB receptor feedback inhibitor 1 (Errfi1) from Rattus norvegicus (Rat).